The chain runs to 586 residues: A-type ATP synthase subunit A (586 aa).

232–239 (GPFGSGKT) lines the ATP pocket.

It belongs to the ATPase alpha/beta chains family. As to quaternary structure, has multiple subunits with at least A(3), B(3), C, D, E, F, H, I and proteolipid K(x).

It is found in the cell membrane. The catalysed reaction is ATP + H2O + 4 H(+)(in) = ADP + phosphate + 5 H(+)(out). Its function is as follows. Component of the A-type ATP synthase that produces ATP from ADP in the presence of a proton gradient across the membrane. The A chain is the catalytic subunit. The protein is A-type ATP synthase subunit A of Methanococcus vannielii (strain ATCC 35089 / DSM 1224 / JCM 13029 / OCM 148 / SB).